Consider the following 345-residue polypeptide: Phosphoribosylformylglycinamidine cyclo-ligase (345 aa).

This sequence belongs to the AIR synthase family.

The protein localises to the cytoplasm. The enzyme catalyses 2-formamido-N(1)-(5-O-phospho-beta-D-ribosyl)acetamidine + ATP = 5-amino-1-(5-phospho-beta-D-ribosyl)imidazole + ADP + phosphate + H(+). It participates in purine metabolism; IMP biosynthesis via de novo pathway; 5-amino-1-(5-phospho-D-ribosyl)imidazole from N(2)-formyl-N(1)-(5-phospho-D-ribosyl)glycinamide: step 2/2. This Shewanella putrefaciens (strain CN-32 / ATCC BAA-453) protein is Phosphoribosylformylglycinamidine cyclo-ligase.